Here is a 55-residue protein sequence, read N- to C-terminus: Large ribosomal subunit protein bL33 (55 aa).

It belongs to the bacterial ribosomal protein bL33 family.

This is Large ribosomal subunit protein bL33 from Rhodopseudomonas palustris (strain BisA53).